Consider the following 156-residue polypeptide: Small ribosomal subunit protein uS7c (156 aa).

It belongs to the universal ribosomal protein uS7 family. Part of the 30S ribosomal subunit.

The protein localises to the plastid. It localises to the chloroplast. Functionally, one of the primary rRNA binding proteins, it binds directly to 16S rRNA where it nucleates assembly of the head domain of the 30S subunit. This Stangeria eriopus (Natal grass cycad) protein is Small ribosomal subunit protein uS7c (rps7).